An 80-amino-acid polypeptide reads, in one-letter code: Lantibiotic Flvalpha.c (80 aa).

Positions 1 to 38 (MNKNPIYRSEEEAKNIACGNVAAELDENSQALDAINGA) are cleaved as a propeptide — cleaved by FlvT. 2,3-didehydrobutyrine; by FlvM1 is present on residues threonine 43 and threonine 47. The segment at residues 52–55 (TLGC) is a cross-link (beta-methyllanthionine (Thr-Cys); by FlvM1). The lanthionine (Ser-Cys); by FlvM1 cross-link spans 58 to 68 (SYGLGNGGYCC). 2 consecutive cross-links (beta-methyllanthionine (Thr-Cys); by FlvM1) follow at residues 69–74 (TYTVEC) and 71–78 (TVECSKTC).

Post-translationally, the lanthionine formed by Ser-58 and Cys-68 forms a putative lipid II binding motif. Maturation of FlvA1 peptides involves the enzymatic conversion of Thr, and Ser into dehydrated AA and the formation of thioether bonds with cysteines. Modifications are processed by the flavecin synthetase FlvM1. This is followed by membrane translocation and cleavage of the modified precursor. In terms of processing, contains DL-lanthionine and DL-beta-methyllanthionine, when coepressed in E.coli with the flavecin synthetase FlvM1.

The protein resides in the secreted. Lanthionine-containing peptide antibiotic (lantibiotic) only active on Gram-positive bacteria in synergy with Flvbeta peptides, which are encoded by the same operon than Flvalpha.a. Shows antibacterial activity in synergy with Flvbeta.b, Flvbeta.c, Flvbeta.e and Flvbeta.g. Does not show antibacterial activity when tested with Flvbeta.a, Flvbeta.d, Flvbeta.f and Flvbeta.h. The bactericidal activity of lantibiotics is based on depolarization of energized bacterial cytoplasmic membranes, initiated by the formation of aqueous transmembrane pores. In Ruminococcus flavefaciens, this protein is Lantibiotic Flvalpha.c.